The chain runs to 232 residues: Orotidine 5'-phosphate decarboxylase (232 aa).

Substrate is bound by residues D13, K35, 62–71 (DLKFHDIPNT), T122, R182, Q191, G211, and R212. The active-site Proton donor is the K64.

Belongs to the OMP decarboxylase family. Type 1 subfamily. Homodimer.

The catalysed reaction is orotidine 5'-phosphate + H(+) = UMP + CO2. Its pathway is pyrimidine metabolism; UMP biosynthesis via de novo pathway; UMP from orotate: step 2/2. Its function is as follows. Catalyzes the decarboxylation of orotidine 5'-monophosphate (OMP) to uridine 5'-monophosphate (UMP). The polypeptide is Orotidine 5'-phosphate decarboxylase (Pseudomonas fluorescens (strain SBW25)).